A 260-amino-acid polypeptide reads, in one-letter code: UPF0294 protein plu0699 (260 aa).

It belongs to the UPF0294 family.

Its subcellular location is the cytoplasm. This Photorhabdus laumondii subsp. laumondii (strain DSM 15139 / CIP 105565 / TT01) (Photorhabdus luminescens subsp. laumondii) protein is UPF0294 protein plu0699.